A 311-amino-acid polypeptide reads, in one-letter code: Terpentetriene synthase (311 aa).

The DDXXD motif signature appears at 77–81; sequence DDRWD.

The protein belongs to the terpene synthase family. As to quaternary structure, homodimer. Mg(2+) serves as cofactor.

The enzyme catalyses terpentedienyl diphosphate = terpentetriene + diphosphate. Its pathway is antibiotic biosynthesis. Involved in the production of the isoprenoid antibiotic terpentecin. Converts terpentedienol diphosphate (TDP) into terpentetriene (TTE). Can also accept geranylgeranyl diphosphate (GGDP) and farnesyl diphosphate (FDP) as substrates. The polypeptide is Terpentetriene synthase (cyc2) (Kitasatospora griseola (Streptomyces griseolosporeus)).